The following is a 164-amino-acid chain: ATP synthase subunit b (164 aa).

The chain crosses the membrane as a helical span at residues Ile-5–Leu-25.

This sequence belongs to the ATPase B chain family. F-type ATPases have 2 components, F(1) - the catalytic core - and F(0) - the membrane proton channel. F(1) has five subunits: alpha(3), beta(3), gamma(1), delta(1), epsilon(1). F(0) has three main subunits: a(1), b(2) and c(10-14). The alpha and beta chains form an alternating ring which encloses part of the gamma chain. F(1) is attached to F(0) by a central stalk formed by the gamma and epsilon chains, while a peripheral stalk is formed by the delta and b chains.

The protein localises to the cell membrane. F(1)F(0) ATP synthase produces ATP from ADP in the presence of a proton or sodium gradient. F-type ATPases consist of two structural domains, F(1) containing the extramembraneous catalytic core and F(0) containing the membrane proton channel, linked together by a central stalk and a peripheral stalk. During catalysis, ATP synthesis in the catalytic domain of F(1) is coupled via a rotary mechanism of the central stalk subunits to proton translocation. In terms of biological role, component of the F(0) channel, it forms part of the peripheral stalk, linking F(1) to F(0). The protein is ATP synthase subunit b of Streptococcus gordonii (strain Challis / ATCC 35105 / BCRC 15272 / CH1 / DL1 / V288).